Consider the following 509-residue polypeptide: MTYEKPDLKRTKATVSFKRIYLHRASEFPGPWLCQCSSIMAQYHAWRGDLPRYLHVLHEKYGDFVRYAPNHVSIRHCDVWEDVYGFQRNVSKYDTTYSPFRLAPDFTSTWNTSNVDVHKSRRKLLNKLFSEQHLDDYGTLITVQVDEFMRQILEALPKDKDVMAGPINFAYKSDVVAREIITSLVSGQTYGFQSGDAKSASLLADISKFERKLYLLGFAPWLKMLPSFKPTLALAQWIVQSSKQGLASGSKNTLVAKMLAARDEEKDVEFSRNDVIADARFFLLGGSVTSSSALSATLFFLLHHPVEMQELYDELRGIFPTYEDIKADAQLMRCKRLRAVFEESMRLAPPVPTLLPRLVGPGGIKACGRYVPEGVVIGAPCWAISRDKRYFDKPNVFKPDRWLADSSDPVALEKMLLATRASQPFSYGPRACPGRALAFRENGLLLAKLVYAFEMEPVQDKSIVEESLTGICDGLVFNQLDTVGAHEVELMVRYRLRLDGKTKRRVSGN.

Residue C432 participates in heme binding.

This sequence belongs to the cytochrome P450 family. It depends on heme as a cofactor.

The protein operates within mycotoxin biosynthesis. Functionally, cytochrome P450 monooxygenase; part of the gene clusters that mediate the biosynthesis of the host-selective toxins (HSTs) AF-toxins responsible for Alternaria black spot of strawberry disease by the strawberry pathotype. AF-toxin I and III are valine derivatives of 2,3-dyhydroxy-isovaleric acid and 2-hydroxy-isovaleric acid respectively, while AF II is an isoleucine derivative of 2-hydroxy-valeric acid. These derivatives are bound to a 9,10-epoxy-8-hydroxy-9-methyl-decatrienoic acid (EDA) moiety. On cellular level, AF-toxins affect plasma membrane of susceptible cells and cause a sudden increase in loss of K(+) after a few minutes of toxin treatment. The aldo-keto reductase AFTS1 catalyzes the conversion of 2-keto-isovaleric acid (2-KIV) to 2-hydroxy-isovaleric acid (2-HIV) by reduction of its ketone to an alcohol. The acyl-CoA ligase AFT1, the hydrolase AFT2 and the enoyl-CoA hydratases AFT3 and AFT6, but also the polyketide synthase AFT9, the acyl-CoA dehydrogenase AFT10, the cytochrome P450 monooxygenase AFT11 and the oxidoreductase AFT12 are all involved in the biosynthesis of the AK-, AF- and ACT-toxin common EDA structural moiety. The exact function of each enzyme, and of additional enzymes identified within the AF-toxin clusters have still to be determined. The chain is Cytochrome P450 monooxygenase AFT11-1 from Alternaria alternata (Alternaria rot fungus).